The chain runs to 225 residues: UPF0758 protein Vapar_4033 (225 aa).

The MPN domain maps to valine 103–leucine 225. Residues histidine 174, histidine 176, and aspartate 187 each coordinate Zn(2+). The short motif at histidine 174–aspartate 187 is the JAMM motif element.

Belongs to the UPF0758 family.

This is UPF0758 protein Vapar_4033 from Variovorax paradoxus (strain S110).